The chain runs to 398 residues: Enolase (398 aa).

Gln-154 lines the (2R)-2-phosphoglycerate pocket. Glu-196 functions as the Proton donor in the catalytic mechanism. The Mg(2+) site is built by Asp-232, Glu-273, and Asp-300. Residues Lys-325, Arg-354, Ser-355, and Lys-376 each contribute to the (2R)-2-phosphoglycerate site. Residue Lys-325 is the Proton acceptor of the active site.

The protein belongs to the enolase family. Mg(2+) serves as cofactor.

It localises to the cytoplasm. Its subcellular location is the secreted. The protein localises to the cell surface. It carries out the reaction (2R)-2-phosphoglycerate = phosphoenolpyruvate + H2O. It functions in the pathway carbohydrate degradation; glycolysis; pyruvate from D-glyceraldehyde 3-phosphate: step 4/5. In terms of biological role, catalyzes the reversible conversion of 2-phosphoglycerate (2-PG) into phosphoenolpyruvate (PEP). It is essential for the degradation of carbohydrates via glycolysis. The protein is Enolase of Halobacterium salinarum (strain ATCC 700922 / JCM 11081 / NRC-1) (Halobacterium halobium).